The sequence spans 360 residues: Amine dehydrogenase (360 aa).

This sequence belongs to the amine dehydrogenase family. Homodimer.

It catalyses the reaction a secondary alkyl amine + NAD(+) + H2O = a ketone + NH4(+) + NADH + H(+). The catalysed reaction is a secondary alkyl amine + NADP(+) + H2O = a ketone + NH4(+) + NADPH + H(+). It carries out the reaction serinol + NAD(+) + H2O = dihydroxyacetone + NH4(+) + NADH + H(+). The enzyme catalyses serinol + NADP(+) + H2O = dihydroxyacetone + NH4(+) + NADPH + H(+). It catalyses the reaction 2-aminopropan-1-ol + NAD(+) + H2O = hydroxyacetone + NH4(+) + NADH + H(+). The catalysed reaction is (R)-1-phenylethylamine + NAD(+) + H2O = acetophenone + NH4(+) + NADH + H(+). It carries out the reaction (S)-1-phenylethylamine + NAD(+) + H2O = acetophenone + NH4(+) + NADH + H(+). The enzyme catalyses (2S)-2-aminobutan-1-ol + NAD(+) + H2O = 1-hydroxy-2-butanone + NH4(+) + NADH + H(+). It catalyses the reaction (2S)-2-amino-3-methylbutan-1-ol + NAD(+) + H2O = 1-hydroxy-3-methylbutan-2-one + NH4(+) + NADH + H(+). The catalysed reaction is 2-aminopentan-1-ol + NAD(+) + H2O = 1-hydroxypentan-2-one + NH4(+) + NADH + H(+). It carries out the reaction (S)-leucinol + NAD(+) + H2O = 1-hydroxy-4-methylpentan-2-one + NH4(+) + NADH + H(+). The enzyme catalyses (S)-isoleucinol + NAD(+) + H2O = (3S)-1-hydroxy-3-methylpentan-2-one + NH4(+) + NADH + H(+). It catalyses the reaction (S)-methioninol + NAD(+) + H2O = 1-hydroxy-4-(methythio)butan-2-one + NH4(+) + NADH + H(+). The catalysed reaction is 2-aminocyclohexanol + NAD(+) + H2O = 2-hydroxycyclohexan-1-one + NH4(+) + NADH + H(+). It carries out the reaction L-alanine + NAD(+) + H2O = pyruvate + NH4(+) + NADH + H(+). The enzyme catalyses D-alanine + NAD(+) + H2O = pyruvate + NH4(+) + NADH + H(+). It catalyses the reaction L-aspartate + NAD(+) + H2O = oxaloacetate + NH4(+) + NADH + H(+). The catalysed reaction is D-aspartate + NAD(+) + H2O = oxaloacetate + NH4(+) + NADH + H(+). It carries out the reaction L-glutamate + NAD(+) + H2O = 2-oxoglutarate + NH4(+) + NADH + H(+). The enzyme catalyses D-glutamate + NAD(+) + H2O = 2-oxoglutarate + NH4(+) + NADH + H(+). It catalyses the reaction L-serine + NAD(+) + H2O = 3-hydroxypyruvate + NH4(+) + NADH + H(+). The catalysed reaction is D-serine + NAD(+) + H2O = 3-hydroxypyruvate + NH4(+) + NADH + H(+). It carries out the reaction methylamine + NAD(+) + H2O = formaldehyde + NH4(+) + NADH + H(+). The enzyme catalyses ethylamine + NAD(+) + H2O = acetaldehyde + NH4(+) + NADH + H(+). It catalyses the reaction propylamine + NAD(+) + H2O = propanal + NH4(+) + NADH + H(+). The catalysed reaction is butylamine + NAD(+) + H2O = butanal + NH4(+) + NADH + H(+). It carries out the reaction hexylamine + NAD(+) + H2O = hexanal + NH4(+) + NADH + H(+). The enzyme catalyses octylamine + NAD(+) + H2O = octanal + NH4(+) + NADH + H(+). It catalyses the reaction (R)-sec-butylamine + NAD(+) + H2O = butan-2-one + NH4(+) + NADH + H(+). The catalysed reaction is (S)-sec-butylamine + NAD(+) + H2O = butan-2-one + NH4(+) + NADH + H(+). It carries out the reaction 2-aminopentane + NAD(+) + H2O = pentan-2-one + NH4(+) + NADH + H(+). The enzyme catalyses 3-aminopentane + NAD(+) + H2O = pentan-3-one + NH4(+) + NADH + H(+). It catalyses the reaction (2R)-heptan-2-amine + NAD(+) + H2O = heptan-2-one + NH4(+) + NADH + H(+). The catalysed reaction is (2S)-heptan-2-amine + NAD(+) + H2O = heptan-2-one + NH4(+) + NADH + H(+). It carries out the reaction benzylamine + NAD(+) + H2O = benzaldehyde + NH4(+) + NADH + H(+). The enzyme catalyses 3-aminobutan-2-ol + NAD(+) + H2O = acetoin + NH4(+) + NADH + H(+). It catalyses the reaction 3-aminobutan-1-ol + NAD(+) + H2O = 4-hydroxybutan-2-one + NH4(+) + NADH + H(+). The catalysed reaction is 5-hydroxypentan-2-amine + NAD(+) + H2O = 5-hydroxypentan-2-one + NH4(+) + NADH + H(+). It carries out the reaction 4-hydroxyhexan-3-amine + NAD(+) + H2O = 4-hydroxyhexan-3-one + NH4(+) + NADH + H(+). The enzyme catalyses 5-hydroxyoctan-4-amine + NAD(+) + H2O = 5-hydroxyoctan-4-one + NH4(+) + NADH + H(+). It catalyses the reaction 2-hydroxy-1-phenylethan-1-amine + NAD(+) + H2O = 2-hydroxyacetophenone + NH4(+) + NADH + H(+). The catalysed reaction is hexan-2-amine + NAD(+) + H2O = hexan-2-one + NH4(+) + NADH + H(+). It carries out the reaction 4-phenylbutan-2-amine + NAD(+) + H2O = 4-phenylbutan-2-one + NH4(+) + NADH + H(+). Catalyzes the reversible oxidative deaminations of a broad range of amines, amino alcohols and amino acids. Catalyzes the reversible dehydrogenation of serinol in the presence of NAD(+) to give dihydroxyacetone, ammonium ion and NADH, while NADP(+) shows a slight activity. Is also able to produce 2-amino-1-propanol and aspartate by the reductive amination of the corresponding keto alcohol (hydroxyacetone) and keto acid (oxaloacetate) in the presence of ammonium ions and NADH, and that of acetophenone from phenylethylamine by the oxidative deamination in the presence of NAD(+). This Streptomyces virginiae (Streptomyces cinnamonensis) protein is Amine dehydrogenase.